Here is a 2974-residue protein sequence, read N- to C-terminus: Mediator of RNA polymerase II transcription subunit 13 (2974 aa).

Basic and acidic residues-rich tracts occupy residues 284–299, 340–367, 374–390, and 624–633; these read EKEP…KTPE, MFEP…AREV, RREE…RADD, and SREKRKEYQP. Disordered regions lie at residues 284–309, 340–394, 624–654, 677–749, 764–801, 1032–1063, 1099–1134, 1140–1159, 1281–1342, 1416–1486, 2052–2078, and 2247–2309; these read EKEP…PQTT, MFEP…NLED, SREK…KRKV, FNAW…FADI, LYNP…PKEE, PHGS…QDGE, GMLS…YPTP, LQAD…FRST, TLAR…TPTY, QGGL…DATA, ELKK…ATPA, and QDEA…PAGM. Residues 351–396 are a coiled coil; that stretch reads KEETAAEKEKRMAAREVRRLRRQRREERRREMEKQRRADDNLEDYD. Composition is skewed to basic residues over residues 634 to 654 and 677 to 688; these read YHRK…KRKV and FNAWKQKKKGPP. Residues 689–717 are compositionally biased toward basic and acidic residues; sequence PKKDLAKKEAAADKDKDKDKEKDKEKDKD. The segment covering 1035 to 1048 has biased composition (basic and acidic residues); sequence SFDHDSEPEFDEQR. 2 stretches are compositionally biased toward polar residues: residues 1122-1134 and 1140-1149; these read IESQ…YPTP and LQADASQAHS. Composition is skewed to pro residues over residues 1284-1299 and 1326-1340; these read RPPP…PTPM and PAYP…PTTP. The segment covering 1443–1464 has biased composition (polar residues); it reads IRNTDAPNDPTVSKLQSAVSRN. Residues 1473-1486 are compositionally biased toward low complexity; that stretch reads AATSIPTATDDATA. The segment covering 2064–2073 has biased composition (polar residues); sequence STQSENSEGN. Residues 2220 to 2301 are a coiled coil; sequence AVEGRLKRQK…EQYPAEESQA (82 aa). Basic and acidic residues-rich tracts occupy residues 2247–2258 and 2281–2292; these read QDEADKREKMDE and EEKKRNKQKENE. The segment at 2347–2974 is mediates transcriptional repression; sequence WKQRDTRVQN…LYHSVARLLV (628 aa).

It belongs to the Mediator complex subunit 13 family. Component of the Mediator complex.

The protein localises to the nucleus. Functionally, component of the Mediator complex, a coactivator involved in regulated gene transcription of nearly all RNA polymerase II-dependent genes. Mediator functions as a bridge to convey information from gene-specific regulatory proteins to the basal RNA polymerase II transcription machinery. Mediator is recruited to promoters by direct interactions with regulatory proteins and serves as a scaffold for the assembly of a functional preinitiation complex with RNA polymerase II and the general transcription factors. This chain is Mediator of RNA polymerase II transcription subunit 13 (let-19), found in Caenorhabditis briggsae.